The sequence spans 273 residues: Epithelial sodium channel subunit beta (273 aa).

Topologically, residues 1–245 (NCYIFNWGQE…RSISESPTTN (245 aa)) are extracellular. 5 disulfide bridges follow: Cys92-Cys179, Cys117-Cys175, Cys121-Cys171, Cys130-Cys157, and Cys132-Cys146. A helical membrane pass occupies residues 246-273 (VVWLLSNLGGQFGFWMGGSVLCIIEFGE).

Belongs to the amiloride-sensitive sodium channel (TC 1.A.6) family. SCNN1B subfamily. As to quaternary structure, component of the heterotrimeric epithelial sodium channel (ENaC) composed of an alpha/SCNN1A, a beta/SCNN1B and a gamma/SCNN1G subunit.

It localises to the apical cell membrane. The protein localises to the cytoplasmic vesicle membrane. The catalysed reaction is Na(+)(in) = Na(+)(out). Originally identified and characterized by its inhibition by the diuretic drug amiloride. In terms of biological role, this is one of the three pore-forming subunits of the heterotrimeric epithelial sodium channel (ENaC), a critical regulator of sodium balance and fluid homeostasis. ENaC operates in epithelial tissues, where it mediates the electrodiffusion of sodium ions from extracellular fluid through the apical membrane of cells, with water following osmotically. It plays a key role in maintaining sodium homeostasis through electrogenic sodium reabsorption in the kidneys. Additionally, ENaC is essential for airway surface liquid homeostasis, which is crucial for proper mucus clearance. The chain is Epithelial sodium channel subunit beta from Aquarana catesbeiana (American bullfrog).